We begin with the raw amino-acid sequence, 528 residues long: NAD(P)H-quinone oxidoreductase chain 4 1 (528 aa).

The next 14 helical transmembrane spans lie at 7–27 (FPWL…IPLI), 32–52 (WVRW…AYVF), 86–106 (LSLP…VAAW), 114–134 (LFFF…LAQD), 136–156 (LLFF…ISIW), 168–188 (FILY…AMAF), 208–228 (ALEL…LPIF), 242–262 (SAPI…YGLI), 276–296 (FAPV…LAAF), 310–330 (IAHM…GING), 331–351 (AVLQ…LTGI), 375–395 (FALF…SGFV), 417–437 (GIAL…LSML), and 463–483 (MAVA…PRLA).

Belongs to the complex I subunit 4 family.

The protein resides in the cellular thylakoid membrane. It carries out the reaction a plastoquinone + NADH + (n+1) H(+)(in) = a plastoquinol + NAD(+) + n H(+)(out). The catalysed reaction is a plastoquinone + NADPH + (n+1) H(+)(in) = a plastoquinol + NADP(+) + n H(+)(out). NDH-1 shuttles electrons from NAD(P)H, via FMN and iron-sulfur (Fe-S) centers, to quinones in the respiratory chain. The immediate electron acceptor for the enzyme in this species is believed to be plastoquinone. Couples the redox reaction to proton translocation (for every two electrons transferred, four hydrogen ions are translocated across the cytoplasmic membrane), and thus conserves the redox energy in a proton gradient. The protein is NAD(P)H-quinone oxidoreductase chain 4 1 of Synechococcus sp. (strain JA-2-3B'a(2-13)) (Cyanobacteria bacterium Yellowstone B-Prime).